A 278-amino-acid polypeptide reads, in one-letter code: Achaete-scute homolog 5 (278 aa).

Positions 1-66 (MPMGAAERGA…GPFGGGLALG (66 aa)) are disordered. The 53-residue stretch at 155-207 (AFIQKRNERERQRVKCVNEGYARLRGHLPGALAEKRLSKVETLRAAIRYIKYL) folds into the bHLH domain. The disordered stretch occupies residues 214-278 (APDGSTPPAS…PFLESEESWH (65 aa)). Residues 230 to 239 (GPCPAPPATP) show a composition bias toward pro residues. Basic and acidic residues predominate over residues 240–249 (RPDRPGDGEA). Positions 252–271 (PSSLVPESSESSCFSPSPFL) are enriched in low complexity.

In terms of assembly, interacts with transcription factor TCF3/E12.

It localises to the nucleus. In terms of biological role, transcription factor. Probably binds E-box motifs 5'-CANNTG-3' in complex with transcription factor TCF3/E12. Negatively modulates transcription of target genes such as CDH1/E-cadherin, perhaps by recruiting the PRC2 repressive complex to regulatory elements. Regulates ameloblast development and tooth germ growth, perhaps acting by positively modulating migration of inner enamel epithelium (IEE) cells. Plays a role in enamel formation. This is Achaete-scute homolog 5 (ASCL5) from Homo sapiens (Human).